Reading from the N-terminus, the 358-residue chain is MKAATACIDLVALQHNLQLIKQQAPHSKLMAVVKANGYGHGLRHVAKHAVGADAFGVARIEEALQLRACGVVKPILLLEGFYSSGDLPVLVTNNIQTVVHCEEQLRDLENAELETPVVVWLKIDSGMHRLGVRPEQYQAFVERLHQCPNVAKPLRYMSHFGCADEMNNEMTPKQIELFLSLTRGCKGERSLAASAGLLAWQESQLEWVRPGIIMYGVSPFGDKTASELGYKPVMTLKSHLIAVRDVKAGESVGYGATWISERDTKVGVIAIGYGDGYPRTAPNGTPVLVNGRKVPIAGRVSMDMLTVDLGPDATDHVGDEAILWGADLPAEDVAQHIGTIAYELVTKLTSRVEMSYSE.

Lysine 34 serves as the catalytic Proton acceptor; specific for D-alanine. An N6-(pyridoxal phosphate)lysine modification is found at lysine 34. Arginine 129 lines the substrate pocket. Tyrosine 254 functions as the Proton acceptor; specific for L-alanine in the catalytic mechanism. Methionine 302 is a substrate binding site.

It belongs to the alanine racemase family. Pyridoxal 5'-phosphate is required as a cofactor.

It catalyses the reaction L-alanine = D-alanine. The protein operates within amino-acid biosynthesis; D-alanine biosynthesis; D-alanine from L-alanine: step 1/1. Functionally, catalyzes the interconversion of L-alanine and D-alanine. May also act on other amino acids. This chain is Alanine racemase (alr), found in Vibrio vulnificus (strain CMCP6).